Reading from the N-terminus, the 467-residue chain is ATP-dependent protease ATPase subunit HslU (467 aa).

ATP is bound by residues Val-22 and 64 to 69; that span reads GVGKTE. Residues 149–192 form a disordered region; that stretch reads QTNNPLESLFGGAIPNFGQNNEDEEEPPTEEIKTKRSEIKRQLE. Positions 178–192 are enriched in basic and acidic residues; that stretch reads EEIKTKRSEIKRQLE. ATP is bound by residues Asp-280, Glu-345, and Arg-417.

The protein belongs to the ClpX chaperone family. HslU subfamily. A double ring-shaped homohexamer of HslV is capped on each side by a ring-shaped HslU homohexamer. The assembly of the HslU/HslV complex is dependent on binding of ATP.

It localises to the cytoplasm. In terms of biological role, ATPase subunit of a proteasome-like degradation complex; this subunit has chaperone activity. The binding of ATP and its subsequent hydrolysis by HslU are essential for unfolding of protein substrates subsequently hydrolyzed by HslV. HslU recognizes the N-terminal part of its protein substrates and unfolds these before they are guided to HslV for hydrolysis. In Staphylococcus aureus (strain Mu3 / ATCC 700698), this protein is ATP-dependent protease ATPase subunit HslU.